The sequence spans 177 residues: Negative modulator of initiation of replication (177 aa).

The protein belongs to the SeqA family. In terms of assembly, homodimer. Polymerizes to form helical filaments.

The protein resides in the cytoplasm. Its function is as follows. Negative regulator of replication initiation, which contributes to regulation of DNA replication and ensures that replication initiation occurs exactly once per chromosome per cell cycle. Binds to pairs of hemimethylated GATC sequences in the oriC region, thus preventing assembly of replication proteins and re-initiation at newly replicated origins. Repression is relieved when the region becomes fully methylated. The sequence is that of Negative modulator of initiation of replication from Vibrio cholerae serotype O1 (strain ATCC 39315 / El Tor Inaba N16961).